Here is a 105-residue protein sequence, read N- to C-terminus: Small ribosomal subunit protein uS10 (105 aa).

Belongs to the universal ribosomal protein uS10 family. As to quaternary structure, part of the 30S ribosomal subunit.

Its function is as follows. Involved in the binding of tRNA to the ribosomes. This is Small ribosomal subunit protein uS10 from Rickettsia massiliae (strain Mtu5).